We begin with the raw amino-acid sequence, 135 residues long: Photosystem II extrinsic protein U (135 aa).

A signal peptide spans 1 to 29; that stretch reads MKRLLSWLTGALVMASLMAGLVMPSSVYA.

The protein belongs to the PsbU family. PSII is composed of 1 copy each of membrane proteins PsbA, PsbB, PsbC, PsbD, PsbE, PsbF, PsbH, PsbI, PsbJ, PsbK, PsbL, PsbM, PsbT, PsbX, PsbY, PsbZ, Psb30/Ycf12, peripheral proteins PsbO, CyanoQ (PsbQ), PsbU, PsbV and a large number of cofactors. It forms dimeric complexes.

The protein resides in the cellular thylakoid membrane. Functionally, one of the extrinsic, lumenal subunits of photosystem II (PSII). PSII is a light-driven water plastoquinone oxidoreductase, using light energy to abstract electrons from H(2)O, generating a proton gradient subsequently used for ATP formation. The extrinsic proteins stabilize the structure of photosystem II oxygen-evolving complex (OEC), the ion environment of oxygen evolution and protect the OEC against heat-induced inactivation. The polypeptide is Photosystem II extrinsic protein U (Synechococcus sp. (strain CC9605)).